Consider the following 241-residue polypeptide: Sugar fermentation stimulation protein homolog (241 aa).

This sequence belongs to the SfsA family.

The polypeptide is Sugar fermentation stimulation protein homolog (Nostoc sp. (strain PCC 7120 / SAG 25.82 / UTEX 2576)).